Here is a 509-residue protein sequence, read N- to C-terminus: ATP synthase subunit alpha (509 aa).

169–176 provides a ligand contact to ATP; the sequence is GDRQTGKT.

The protein belongs to the ATPase alpha/beta chains family. In terms of assembly, F-type ATPases have 2 components, CF(1) - the catalytic core - and CF(0) - the membrane proton channel. CF(1) has five subunits: alpha(3), beta(3), gamma(1), delta(1), epsilon(1). CF(0) has three main subunits: a(1), b(2) and c(9-12). The alpha and beta chains form an alternating ring which encloses part of the gamma chain. CF(1) is attached to CF(0) by a central stalk formed by the gamma and epsilon chains, while a peripheral stalk is formed by the delta and b chains.

Its subcellular location is the cell inner membrane. It carries out the reaction ATP + H2O + 4 H(+)(in) = ADP + phosphate + 5 H(+)(out). Functionally, produces ATP from ADP in the presence of a proton gradient across the membrane. The alpha chain is a regulatory subunit. In Novosphingobium aromaticivorans (strain ATCC 700278 / DSM 12444 / CCUG 56034 / CIP 105152 / NBRC 16084 / F199), this protein is ATP synthase subunit alpha.